We begin with the raw amino-acid sequence, 107 residues long: MNARKTYILKLYVAGNTPNSMRALNTLREILESEFKGVYALKVIDVLKSPQLAEEDKILATPTLSKILPPPVRRIIGDLSDREKVLIGLDLLYDELSDNEMFYSSDK.

The protein belongs to the KaiB family. May undergo a major conformational rearrangment; in the free state forms homooligomers. When bound to KaiC switches to a monomeric thioredoxin-fold (KaiB(fs)). The active oscillator complex is probably KaiC(6):KaiB(6).

Its function is as follows. Component of the KaiBC clock protein complex, which constitutes the main circadian regulator in cyanobacteria; it may modify the ATPase activity of KaiC. In terms of biological role, may be a metamorphic protein which reversibly switches between an inactive tetrameric fold and a rare, thioredoxin-like monomeric fold (KaiB(fs)). KaiB(fs) binds phospho-KaiC, and perhaps clock output effectors. This is Circadian clock oscillator protein KaiB from Prochlorococcus marinus (strain NATL2A).